The following is a 268-amino-acid chain: Taurine import ATP-binding protein TauB (268 aa).

The 233-residue stretch at 4 to 236 folds into the ABC transporter domain; the sequence is LSINNLSMRF…LGVDSDLREV (233 aa). 41–48 is an ATP binding site; it reads GPSGCGKT.

The protein belongs to the ABC transporter superfamily. Taurine importer (TC 3.A.1.17.1) family. The complex is composed of two ATP-binding proteins (TauB), two transmembrane proteins (TauC) and a solute-binding protein (TauA).

The protein resides in the cell inner membrane. The enzyme catalyses taurine(out) + ATP + H2O = taurine(in) + ADP + phosphate + H(+). Part of the ABC transporter complex TauABC involved in taurine import. Responsible for energy coupling to the transport system. This Roseobacter denitrificans (strain ATCC 33942 / OCh 114) (Erythrobacter sp. (strain OCh 114)) protein is Taurine import ATP-binding protein TauB.